We begin with the raw amino-acid sequence, 122 residues long: Large ribosomal subunit protein uL14 (122 aa).

The protein belongs to the universal ribosomal protein uL14 family. Part of the 50S ribosomal subunit. Forms a cluster with proteins L3 and L19. In the 70S ribosome, L14 and L19 interact and together make contacts with the 16S rRNA in bridges B5 and B8.

Binds to 23S rRNA. Forms part of two intersubunit bridges in the 70S ribosome. The protein is Large ribosomal subunit protein uL14 of Chlorobium luteolum (strain DSM 273 / BCRC 81028 / 2530) (Pelodictyon luteolum).